The chain runs to 192 residues: UPF0301 protein BTH_I1462 (192 aa).

This sequence belongs to the UPF0301 (AlgH) family.

This Burkholderia thailandensis (strain ATCC 700388 / DSM 13276 / CCUG 48851 / CIP 106301 / E264) protein is UPF0301 protein BTH_I1462.